The chain runs to 412 residues: uncharacterized protein (412 aa).

An N-terminal signal peptide occupies residues 1–21; sequence MIIPMLRILLIVLFVLNLVTS. Disordered regions lie at residues 85–134, 250–294, and 327–357; these read QPPA…STTT, STTE…TPGT, and VELGEGDDDEENDDDSSEEEETKPPARHVRE. Residues 88–105 are compositionally biased toward low complexity; the sequence is ASLTSLPAAPPSAQVAPP. The span at 124–134 shows a compositional bias: polar residues; sequence TPQASISSTTT. Composition is skewed to low complexity over residues 250–259 and 266–293; these read STTENTTEQS and TTSTYSTTTTAPVNTTSAPTTTHLGTPG. Over residues 330-347 the composition is skewed to acidic residues; the sequence is GEGDDDEENDDDSSEEEE. Residues 348–357 show a composition bias toward basic and acidic residues; it reads TKPPARHVRE. Residues 371–408 form the ShKT domain; it reads CDEEEDDKGKICKLWAAGGLCGTHKPTMFLFCRKTCLC.

This is an uncharacterized protein from Caenorhabditis elegans.